We begin with the raw amino-acid sequence, 190 residues long: Crossover junction endodeoxyribonuclease RuvC (190 aa).

Active-site residues include D7, E68, and D141. The Mg(2+) site is built by D7, E68, and D141.

The protein belongs to the RuvC family. In terms of assembly, homodimer which binds Holliday junction (HJ) DNA. The HJ becomes 2-fold symmetrical on binding to RuvC with unstacked arms; it has a different conformation from HJ DNA in complex with RuvA. In the full resolvosome a probable DNA-RuvA(4)-RuvB(12)-RuvC(2) complex forms which resolves the HJ. Mg(2+) is required as a cofactor.

It localises to the cytoplasm. It catalyses the reaction Endonucleolytic cleavage at a junction such as a reciprocal single-stranded crossover between two homologous DNA duplexes (Holliday junction).. In terms of biological role, the RuvA-RuvB-RuvC complex processes Holliday junction (HJ) DNA during genetic recombination and DNA repair. Endonuclease that resolves HJ intermediates. Cleaves cruciform DNA by making single-stranded nicks across the HJ at symmetrical positions within the homologous arms, yielding a 5'-phosphate and a 3'-hydroxyl group; requires a central core of homology in the junction. The consensus cleavage sequence is 5'-(A/T)TT(C/G)-3'. Cleavage occurs on the 3'-side of the TT dinucleotide at the point of strand exchange. HJ branch migration catalyzed by RuvA-RuvB allows RuvC to scan DNA until it finds its consensus sequence, where it cleaves and resolves the cruciform DNA. In Endomicrobium trichonymphae, this protein is Crossover junction endodeoxyribonuclease RuvC.